Here is a 469-residue protein sequence, read N- to C-terminus: uncharacterized protein (469 aa).

This is an uncharacterized protein from Treponema pallidum (strain Nichols).